Reading from the N-terminus, the 205-residue chain is Isochorismatase domain-containing protein 2 (205 aa).

It belongs to the isochorismatase family.

This Xenopus laevis (African clawed frog) protein is Isochorismatase domain-containing protein 2 (isoc2).